Consider the following 623-residue polypeptide: V-type proton ATPase catalytic subunit A (623 aa).

An ATP-binding site is contributed by 252–259 (GAFGCGKT).

It belongs to the ATPase alpha/beta chains family. As to quaternary structure, V-ATPase is a heteromultimeric enzyme composed of a peripheral catalytic V1 complex (main components: subunits A, B, C, D, E, and F) attached to an integral membrane V0 proton pore complex (main component: the proteolipid protein).

It catalyses the reaction ATP + H2O + 4 H(+)(in) = ADP + phosphate + 5 H(+)(out). Its function is as follows. Catalytic subunit of the peripheral V1 complex of vacuolar ATPase. V-ATPase vacuolar ATPase is responsible for acidifying a variety of intracellular compartments in eukaryotic cells. This Brassica napus (Rape) protein is V-type proton ATPase catalytic subunit A.